The following is a 70-amino-acid chain: Large ribosomal subunit protein uL29 (70 aa).

It belongs to the universal ribosomal protein uL29 family.

This Clostridium botulinum (strain Eklund 17B / Type B) protein is Large ribosomal subunit protein uL29.